The chain runs to 366 residues: Chorismate synthase (366 aa).

The NADP(+) site is built by Arg48 and Arg54. FMN is bound by residues 125-127 (RSS), 238-239 (NA), Gly278, 293-297 (KPTSS), and Arg319.

The protein belongs to the chorismate synthase family. As to quaternary structure, homotetramer. FMNH2 serves as cofactor.

It catalyses the reaction 5-O-(1-carboxyvinyl)-3-phosphoshikimate = chorismate + phosphate. It functions in the pathway metabolic intermediate biosynthesis; chorismate biosynthesis; chorismate from D-erythrose 4-phosphate and phosphoenolpyruvate: step 7/7. Functionally, catalyzes the anti-1,4-elimination of the C-3 phosphate and the C-6 proR hydrogen from 5-enolpyruvylshikimate-3-phosphate (EPSP) to yield chorismate, which is the branch point compound that serves as the starting substrate for the three terminal pathways of aromatic amino acid biosynthesis. This reaction introduces a second double bond into the aromatic ring system. The sequence is that of Chorismate synthase from Chromobacterium violaceum (strain ATCC 12472 / DSM 30191 / JCM 1249 / CCUG 213 / NBRC 12614 / NCIMB 9131 / NCTC 9757 / MK).